We begin with the raw amino-acid sequence, 956 residues long: UvrABC system protein A (956 aa).

Position 33-40 (33-40) interacts with ATP; it reads GLSGSGKS. The segment at 252–279 adopts a C4-type zinc-finger fold; that stretch reads CPYCGFSVGELEPRMFSFNSPFGACPTC. 2 consecutive ABC transporter domains span residues 309 to 587 and 607 to 936; these read WRPI…KNSI and GNGL…KYLK. 639-646 contacts ATP; it reads GVSGSGKS. The C4-type zinc finger occupies 738–764; it reads CEACKGDGIIKIEMHFLPDVYVPCEVC.

It belongs to the ABC transporter superfamily. UvrA family. As to quaternary structure, forms a heterotetramer with UvrB during the search for lesions.

It is found in the cytoplasm. The UvrABC repair system catalyzes the recognition and processing of DNA lesions. UvrA is an ATPase and a DNA-binding protein. A damage recognition complex composed of 2 UvrA and 2 UvrB subunits scans DNA for abnormalities. When the presence of a lesion has been verified by UvrB, the UvrA molecules dissociate. The sequence is that of UvrABC system protein A from Listeria monocytogenes serotype 4b (strain F2365).